A 164-amino-acid chain; its full sequence is PTS system sorbose-specific EIIB component (164 aa).

In terms of domain architecture, PTS EIIB type-4 spans 1–164 (MIITLARVDD…AKIDEVFGKE (164 aa)). The active-site Pros-phosphohistidine intermediate is His-14. His-14 carries the post-translational modification Phosphohistidine; by EIIA.

Its subcellular location is the cytoplasm. It catalyses the reaction keto-L-sorbose(out) + N(pros)-phospho-L-histidyl-[protein] = L-sorbose 1-phosphate(in) + L-histidyl-[protein]. The phosphoenolpyruvate-dependent sugar phosphotransferase system (PTS), a major carbohydrate active transport system, catalyzes the phosphorylation of incoming sugar substrates concomitant with their translocation across the cell membrane. The enzyme II SorABCD PTS system is involved in L-sorbose transport. In Lacticaseibacillus casei (Lactobacillus casei), this protein is PTS system sorbose-specific EIIB component.